Here is a 356-residue protein sequence, read N- to C-terminus: 3-dehydroquinate synthase (356 aa).

Residues 106–110, 130–131, lysine 143, lysine 152, and 170–173 each bind NAD(+); these read GVVGD, TS, and FLKT. Zn(2+) contacts are provided by glutamate 185, histidine 246, and histidine 263.

Belongs to the sugar phosphate cyclases superfamily. Dehydroquinate synthase family. Requires NAD(+) as cofactor. Co(2+) is required as a cofactor. The cofactor is Zn(2+).

It localises to the cytoplasm. It catalyses the reaction 7-phospho-2-dehydro-3-deoxy-D-arabino-heptonate = 3-dehydroquinate + phosphate. It participates in metabolic intermediate biosynthesis; chorismate biosynthesis; chorismate from D-erythrose 4-phosphate and phosphoenolpyruvate: step 2/7. Catalyzes the conversion of 3-deoxy-D-arabino-heptulosonate 7-phosphate (DAHP) to dehydroquinate (DHQ). This is 3-dehydroquinate synthase from Clostridium acetobutylicum (strain ATCC 824 / DSM 792 / JCM 1419 / IAM 19013 / LMG 5710 / NBRC 13948 / NRRL B-527 / VKM B-1787 / 2291 / W).